The following is a 210-amino-acid chain: Peptidyl-tRNA hydrolase (210 aa).

Tyr-14 contacts tRNA. His-19 functions as the Proton acceptor in the catalytic mechanism. TRNA contacts are provided by Phe-64, Asn-66, and Asn-112.

It belongs to the PTH family. As to quaternary structure, monomer.

It localises to the cytoplasm. The catalysed reaction is an N-acyl-L-alpha-aminoacyl-tRNA + H2O = an N-acyl-L-amino acid + a tRNA + H(+). In terms of biological role, hydrolyzes ribosome-free peptidyl-tRNAs (with 1 or more amino acids incorporated), which drop off the ribosome during protein synthesis, or as a result of ribosome stalling. Functionally, catalyzes the release of premature peptidyl moieties from peptidyl-tRNA molecules trapped in stalled 50S ribosomal subunits, and thus maintains levels of free tRNAs and 50S ribosomes. This chain is Peptidyl-tRNA hydrolase, found in Methylorubrum extorquens (strain CM4 / NCIMB 13688) (Methylobacterium extorquens).